The primary structure comprises 231 residues: NADH-ubiquinone oxidoreductase chain 4 (231 aa).

Transmembrane regions (helical) follow at residues 1–21 (PIAG…YGII), 34–54 (MFLP…LTCL), 63–85 (IAYS…TPWG), 89–111 (AMAL…NTTY), 118–138 (ILIL…WWLL), and 169–189 (TIIL…HMFL).

Belongs to the complex I subunit 4 family.

Its subcellular location is the mitochondrion membrane. The catalysed reaction is a ubiquinone + NADH + 5 H(+)(in) = a ubiquinol + NAD(+) + 4 H(+)(out). Its function is as follows. Core subunit of the mitochondrial membrane respiratory chain NADH dehydrogenase (Complex I) that is believed to belong to the minimal assembly required for catalysis. Complex I functions in the transfer of electrons from NADH to the respiratory chain. The immediate electron acceptor for the enzyme is believed to be ubiquinone. This is NADH-ubiquinone oxidoreductase chain 4 (MT-ND4) from Trimeresurus cantori (Cantor's pit viper).